The primary structure comprises 200 residues: Ciliary neurotrophic factor (200 aa).

Belongs to the CNTF family. In terms of tissue distribution, nervous system.

The protein localises to the cytoplasm. In terms of biological role, CNTF is a survival factor for various neuronal cell types. Seems to prevent the degeneration of motor axons after axotomy. The chain is Ciliary neurotrophic factor (Cntf) from Rattus norvegicus (Rat).